The primary structure comprises 149 residues: MRCPFCAMEETKVIDSRLVSDGYQVRRRRECGYCHERFTTFESAEVIVPKIIKNDGSREPFDEDKLRRGIQHALEKRPVSSDDVEKAISRIIYQLRATGERDVKSQDVGRLVMAELKELDKVAYIRFASVYLSFDDINQFTNEIEKLKD.

Residues 3–34 (CPFCAMEETKVIDSRLVSDGYQVRRRRECGYC) fold into a zinc finger. One can recognise an ATP-cone domain in the interval 49–139 (PKIIKNDGSR…VYLSFDDINQ (91 aa)).

Belongs to the NrdR family. The cofactor is Zn(2+).

Its function is as follows. Negatively regulates transcription of bacterial ribonucleotide reductase nrd genes and operons by binding to NrdR-boxes. The protein is Transcriptional repressor NrdR of Histophilus somni (strain 129Pt) (Haemophilus somnus).